Consider the following 216-residue polypeptide: uncharacterized protein (216 aa).

It is found in the plastid. The protein localises to the chloroplast. This is an uncharacterized protein from Pyropia yezoensis (Susabi-nori).